We begin with the raw amino-acid sequence, 363 residues long: Guanine nucleotide-binding protein alpha-11 subunit (363 aa).

One can recognise a G-alpha domain in the interval 26 to 363 (KMLKILLLGG…KISMEKVGFM (338 aa)). Residues 29–42 (KILLLGGPECGKST) are G1 motif. GTP contacts are provided by residues 34–41 (GGPECGKS), 172–178 (LRARVPT), 197–201 (DVGGQ), 276–279 (NKID), and alanine 335. Residues serine 41 and threonine 178 each coordinate Mg(2+). Positions 170-178 (DVLRARVPT) are G2 motif. The G3 motif stretch occupies residues 193 to 202 (LRMVDVGGQR). Residues 272–279 (ILFLNKID) are G4 motif. The G5 motif stretch occupies residues 333 to 338 (TNATDT).

The protein belongs to the G-alpha family. In terms of assembly, g proteins are composed of 3 units; alpha, beta and gamma. The alpha chain contains the guanine nucleotide binding site. In terms of tissue distribution, expressed in ADL and ASH neurons.

Its function is as follows. Guanine nucleotide-binding proteins (G proteins) are involved as modulators or transducers in various transmembrane signaling systems. Mediates the transduction of food and serotonin signals, which modulates the avoidance response to the odorant octanol. Has a role in lifespan to promote longevity. The sequence is that of Guanine nucleotide-binding protein alpha-11 subunit (gpa-11) from Caenorhabditis elegans.